We begin with the raw amino-acid sequence, 113 residues long: Insulin (113 aa).

An N-terminal signal peptide occupies residues 1–24 (MAALWLQAFSLLVLMMVSWPGSQA). 3 disulfides stabilise this stretch: cysteine 32/cysteine 99, cysteine 44/cysteine 112, and cysteine 98/cysteine 103. A propeptide spans 56–90 (DVDPLLGFLPPKAGGAVVQGGENEVTFKDQMEMMV) (c peptide).

The protein belongs to the insulin family. Heterodimer of a B chain and an A chain linked by two disulfide bonds.

It is found in the secreted. In terms of biological role, insulin decreases blood glucose concentration. It increases cell permeability to monosaccharides, amino acids and fatty acids. It accelerates glycolysis, the pentose phosphate cycle, and glycogen synthesis in liver. The chain is Insulin (ins) from Oreochromis niloticus (Nile tilapia).